Consider the following 575-residue polypeptide: MYHPGRSPSFLITLANVICAAILFDIHTGGYQPGSLIPIVAWMTPFVTLLWLSASFATYLYKYVRTRLLPEEKVARVYYTAQSAPYFDPALGVMMQFAPSHGGASIEVQVNPSWISLLGGSLKINGDDASNESAVLGSFYSSVKPGDEPASLVAIKSGPQTIGFGCRTKIDGDDCLFTANHVWNNSMRPTALAKRGKQVAIEDWETPLSCDHKMLDFVVVRVPKHVWSKLGVKATQLVCPSDKDAVTCYGGSSSDNLLSGTGVCSKVDFSWKLTHSCPTAAGWSGTPIYSSRGVVGMHVGFEDIGKLNRGVNAFYVSNYLLRSQETLPPELSVIEIPFEDVETRSYEFIEVEIKGRGKAKLGKREFAWIPESGKYWADDDDDSLPPPPKVVDGKMVWSSAQETVAEPLNYQRAAGSRPLPPFLNLQATTSKKEKQPLQEECPLDLLGSRLASLESCVEKILQMKSLELLGSSQNCQTSPGPSEAPKQSFTPCYSKQESLIPLESQGILKELVKTSLSATPPPNPVTVSVEKPGPSTQSTKKSARRRNRRKSTRKPVQESPSPASPQPTKTSLRGI.

Helical transmembrane passes span 10-30 (FLITLANVICAAILFDIHTGG), 36-56 (LIPIVAWMTPFVTLLWLSASF), and 74-96 (VARVYYTAQSAPYFDPALGVMMQ). The region spanning 135–335 (VLGSFYSSVK…TLPPELSVIE (201 aa)) is the Peptidase S39 domain. Catalysis depends on for protease activity residues His181, Asp216, and Ser284. The tract at residues 513–575 (KTSLSATPPP…QPTKTSLRGI (63 aa)) is disordered. Positions 541-553 (KSARRRNRRKSTR) are enriched in basic residues. Positions 558–575 (ESPSPASPQPTKTSLRGI) are enriched in polar residues.

The polyprotein is proteolytically cleaved into several chains by the viral protease.

It is found in the host membrane. Functionally, responsible for cleavages of polyprotein P2A and replicase polyprotein P2AB. Its function is as follows. Covalently attached to the 5' extremity of the genomic and subgenomic RNAs. It may serve as a primer for the replicase. The sequence is that of Polyprotein P2A from Southern bean mosaic virus (isolate Bean/United States/Arkansas) (SBMV).